We begin with the raw amino-acid sequence, 255 residues long: 5'-nucleotidase SurE (255 aa).

D8, D9, S39, and N91 together coordinate a divalent metal cation.

This sequence belongs to the SurE nucleotidase family. It depends on a divalent metal cation as a cofactor.

The protein localises to the cytoplasm. It catalyses the reaction a ribonucleoside 5'-phosphate + H2O = a ribonucleoside + phosphate. Its function is as follows. Nucleotidase that shows phosphatase activity on nucleoside 5'-monophosphates. This Acinetobacter baumannii (strain ATCC 17978 / DSM 105126 / CIP 53.77 / LMG 1025 / NCDC KC755 / 5377) protein is 5'-nucleotidase SurE.